We begin with the raw amino-acid sequence, 274 residues long: Probable lipoprotein peptidase YaeF (274 aa).

Positions methionine 1–alanine 20 are cleaved as a signal peptide. The N-palmitoyl cysteine moiety is linked to residue cysteine 21. The S-diacylglycerol cysteine moiety is linked to residue cysteine 21. Cysteine 207 (nucleophile) is an active-site residue. Histidine 257 functions as the Proton acceptor in the catalytic mechanism.

Its subcellular location is the cell inner membrane. This chain is Probable lipoprotein peptidase YaeF (yaeF), found in Escherichia coli (strain K12).